Consider the following 314-residue polypeptide: Probable cell division protein WhiA (314 aa).

A DNA-binding region (H-T-H motif) is located at residues 274–308 (SLKELGEMVSTGTISKSGVNHRLRKLNELADKIRS).

The protein belongs to the WhiA family.

In terms of biological role, involved in cell division and chromosome segregation. This is Probable cell division protein WhiA from Staphylococcus carnosus (strain TM300).